Reading from the N-terminus, the 117-residue chain is Large ribosomal subunit protein bL20 (117 aa).

The protein belongs to the bacterial ribosomal protein bL20 family.

Its function is as follows. Binds directly to 23S ribosomal RNA and is necessary for the in vitro assembly process of the 50S ribosomal subunit. It is not involved in the protein synthesizing functions of that subunit. This Pasteurella multocida (strain Pm70) protein is Large ribosomal subunit protein bL20.